We begin with the raw amino-acid sequence, 153 residues long: 3-hydroxyacyl-[acyl-carrier-protein] dehydratase FabZ (153 aa).

His54 is a catalytic residue.

Belongs to the thioester dehydratase family. FabZ subfamily.

The protein resides in the cytoplasm. The enzyme catalyses a (3R)-hydroxyacyl-[ACP] = a (2E)-enoyl-[ACP] + H2O. Functionally, involved in unsaturated fatty acids biosynthesis. Catalyzes the dehydration of short chain beta-hydroxyacyl-ACPs and long chain saturated and unsaturated beta-hydroxyacyl-ACPs. This chain is 3-hydroxyacyl-[acyl-carrier-protein] dehydratase FabZ, found in Shewanella amazonensis (strain ATCC BAA-1098 / SB2B).